A 406-amino-acid chain; its full sequence is Glutamyl-tRNA reductase (406 aa).

Residues 50 to 53, Ser-107, 112 to 114, and Gln-118 each bind substrate; these read TCNR and EPQ. Cys-51 acts as the Nucleophile in catalysis. 187–192 is a binding site for NADP(+); sequence GAGEMG.

Belongs to the glutamyl-tRNA reductase family. Homodimer.

The enzyme catalyses (S)-4-amino-5-oxopentanoate + tRNA(Glu) + NADP(+) = L-glutamyl-tRNA(Glu) + NADPH + H(+). The protein operates within porphyrin-containing compound metabolism; protoporphyrin-IX biosynthesis; 5-aminolevulinate from L-glutamyl-tRNA(Glu): step 1/2. In terms of biological role, catalyzes the NADPH-dependent reduction of glutamyl-tRNA(Glu) to glutamate 1-semialdehyde (GSA). This Aquifex aeolicus (strain VF5) protein is Glutamyl-tRNA reductase.